The following is a 383-amino-acid chain: GTPase-interacting component 2 (383 aa).

Residues 63–106 (SNKKNIELPPLSPNSHPSCHHRRSNSNSAKSKESSSSSSSANKT) are disordered. Residues 87–105 (NSNSAKSKESSSSSSSANK) show a composition bias toward low complexity. Residues 134–147 (ISTPFDFQHISHAD) enclose the CRIB domain. Residues 155-165 (EQLQEPSSLST) show a composition bias toward polar residues. Positions 155–189 (EQLQEPSSLSTEIKDDYTSSSSKRDSKSLNKAFVT) are disordered. Positions 166–182 (EIKDDYTSSSSKRDSKS) are enriched in basic and acidic residues. A phosphoserine mark is found at Ser254, Ser258, Ser337, Ser345, and Ser367. The tract at residues 319-361 (ETPNSNKDSAKAFFPSRQSPLPKRRNSIATPSPQSKFSYSDSP) is disordered. The span at 345-361 (SIATPSPQSKFSYSDSP) shows a compositional bias: polar residues.

Belongs to the BORG/CEP family. Interacts with GTP-bound CDC42.

It localises to the bud neck. It is found in the bud tip. Its subcellular location is the cytoplasm. The protein resides in the cell cortex. The protein localises to the cytoskeleton. Functionally, required for cell size and shape control, bud site selection, bud emergence, actin cytoskeletal organization, mitotic spindle orientation/positioning, and mating projection formation in response to mating pheromone. In Saccharomyces cerevisiae (strain ATCC 204508 / S288c) (Baker's yeast), this protein is GTPase-interacting component 2 (GIC2).